A 357-amino-acid polypeptide reads, in one-letter code: Chorismate synthase (357 aa).

Over residues 38 to 49 the composition is skewed to basic and acidic residues; sequence EKDIQPDLDRRK. The disordered stretch occupies residues 38–60; that stretch reads EKDIQPDLDRRKPGTSRYTTPRR. NADP(+)-binding residues include arginine 48 and arginine 54. FMN-binding positions include 125-127, 243-244, glycine 283, 298-302, and arginine 324; these read RSS, NA, and KPTSS.

It belongs to the chorismate synthase family. Homotetramer. It depends on FMNH2 as a cofactor.

The catalysed reaction is 5-O-(1-carboxyvinyl)-3-phosphoshikimate = chorismate + phosphate. It participates in metabolic intermediate biosynthesis; chorismate biosynthesis; chorismate from D-erythrose 4-phosphate and phosphoenolpyruvate: step 7/7. In terms of biological role, catalyzes the anti-1,4-elimination of the C-3 phosphate and the C-6 proR hydrogen from 5-enolpyruvylshikimate-3-phosphate (EPSP) to yield chorismate, which is the branch point compound that serves as the starting substrate for the three terminal pathways of aromatic amino acid biosynthesis. This reaction introduces a second double bond into the aromatic ring system. The protein is Chorismate synthase of Haemophilus influenzae (strain PittEE).